Consider the following 186-residue polypeptide: Dual-action ribosomal maturation protein DarP (186 aa).

Belongs to the DarP family.

Its subcellular location is the cytoplasm. In terms of biological role, member of a network of 50S ribosomal subunit biogenesis factors which assembles along the 30S-50S interface, preventing incorrect 23S rRNA structures from forming. Promotes peptidyl transferase center (PTC) maturation. This chain is Dual-action ribosomal maturation protein DarP, found in Proteus mirabilis (strain HI4320).